The sequence spans 196 residues: Small nuclear ribonucleoprotein-associated protein B (196 aa).

The 95-residue stretch at 7 to 101 (AHSSRLANLI…ILSTVVEDKP (95 aa)) folds into the Sm domain. The Nuclear localization signal signature appears at 105 to 132 (KKERLVRDKKEKKQAQKQTKLRKEKEKK). Residues 108 to 118 (RLVRDKKEKKQ) are compositionally biased toward basic and acidic residues. A disordered region spans residues 108 to 196 (RLVRDKKEKK…FQPPPGFKRK (89 aa)). Residues 140 to 181 (NTANAKHTSSNSREIAQPSSSRYNGGNDNIGANRSRFNNEAP) are compositionally biased toward polar residues.

Belongs to the snRNP SmB/SmN family. As to quaternary structure, component of the Sm core complex, present in spliceosomal snRNP U1, U2, U4/U6 and U5. The core complex contains SMB1, SMD1, SMD2, SMD3, SME1, SMX3 and SMX2 (Sm proteins B, D1, D2, D3, E, F and G, respectively), and is probably a heptameric ring structure. SMB1 specifically interacts with SMD3. Belongs to the CWC complex (or CEF1-associated complex), a spliceosome sub-complex reminiscent of a late-stage spliceosome composed of the U2, U5 and U6 snRNAs and at least BUD13, BUD31, BRR2, CDC40, CEF1, CLF1, CUS1, CWC2, CWC15, CWC21, CWC22, CWC23, CWC24, CWC25, CWC27, ECM2, HSH155, IST3, ISY1, LEA1, MSL1, NTC20, PRP8, PRP9, PRP11, PRP19, PRP21, PRP22, PRP45, PRP46, SLU7, SMB1, SMD1, SMD2, SMD3, SMX2, SMX3, SNT309, SNU114, SPP2, SYF1, SYF2, RSE1 and YJU2. Component of the U4/U6-U5 tri-snRNP complex composed of the U4, U6 and U5 snRNAs and at least PRP3, PRP4, PRP6, PRP8, PRP18, PRP38, SNU13, SNU23, SNU66, SNU114, SPP381, SMB1, SMD1, SMD2, SMD3, SMX2, SMX3, LSM2, LSM3, LSM4, LSM5, LSM6, LSM7, LSM8, BRR2 and DIB1. Interacts with the trimethylguanosine synthase TGS1.

It localises to the nucleus. Its subcellular location is the cytoplasm. Plays a role in pre-mRNA splicing as a core component of the spliceosomal U1, U2, U4 and U5 small nuclear ribonucleoproteins (snRNPs), the building blocks of the spliceosome. This chain is Small nuclear ribonucleoprotein-associated protein B (SMB1), found in Saccharomyces cerevisiae (strain ATCC 204508 / S288c) (Baker's yeast).